The primary structure comprises 193 residues: Leucyl/phenylalanyl-tRNA--protein transferase (193 aa).

This sequence belongs to the L/F-transferase family.

Its subcellular location is the cytoplasm. It carries out the reaction N-terminal L-lysyl-[protein] + L-leucyl-tRNA(Leu) = N-terminal L-leucyl-L-lysyl-[protein] + tRNA(Leu) + H(+). The catalysed reaction is N-terminal L-arginyl-[protein] + L-leucyl-tRNA(Leu) = N-terminal L-leucyl-L-arginyl-[protein] + tRNA(Leu) + H(+). It catalyses the reaction L-phenylalanyl-tRNA(Phe) + an N-terminal L-alpha-aminoacyl-[protein] = an N-terminal L-phenylalanyl-L-alpha-aminoacyl-[protein] + tRNA(Phe). Its function is as follows. Functions in the N-end rule pathway of protein degradation where it conjugates Leu, Phe and, less efficiently, Met from aminoacyl-tRNAs to the N-termini of proteins containing an N-terminal arginine or lysine. The protein is Leucyl/phenylalanyl-tRNA--protein transferase of Akkermansia muciniphila (strain ATCC BAA-835 / DSM 22959 / JCM 33894 / BCRC 81048 / CCUG 64013 / CIP 107961 / Muc).